Reading from the N-terminus, the 98-residue chain is Large ribosomal subunit protein eL21 (98 aa).

Residues 1–17 are compositionally biased toward basic residues; sequence MQRSRGFRSKSRRKMTK. A disordered region spans residues 1–28; it reads MQRSRGFRSKSRRKMTKVVREGRSNPIT.

Belongs to the eukaryotic ribosomal protein eL21 family.

The protein is Large ribosomal subunit protein eL21 of Methanobrevibacter smithii (strain ATCC 35061 / DSM 861 / OCM 144 / PS).